A 314-amino-acid polypeptide reads, in one-letter code: tRNA dimethylallyltransferase (314 aa).

ATP is bound at residue 12–19 (GPTGTGKS). 14–19 (TGTGKS) contacts substrate.

The protein belongs to the IPP transferase family. As to quaternary structure, monomer. It depends on Mg(2+) as a cofactor.

It carries out the reaction adenosine(37) in tRNA + dimethylallyl diphosphate = N(6)-dimethylallyladenosine(37) in tRNA + diphosphate. Its function is as follows. Catalyzes the transfer of a dimethylallyl group onto the adenine at position 37 in tRNAs that read codons beginning with uridine, leading to the formation of N6-(dimethylallyl)adenosine (i(6)A). This chain is tRNA dimethylallyltransferase, found in Mycolicibacterium paratuberculosis (strain ATCC BAA-968 / K-10) (Mycobacterium paratuberculosis).